A 199-amino-acid chain; its full sequence is Peroxiredoxin-2 (199 aa).

The Thioredoxin domain occupies 7–165 (AHVGKPAPEF…ALRLVQAFQY (159 aa)). Residue cysteine 52 is the Cysteine sulfenic acid (-SOH) intermediate of the active site. Phosphoserine is present on serine 113. A Phosphothreonine modification is found at threonine 183. Lysine 197 carries the N6-acetyllysine modification.

This sequence belongs to the peroxiredoxin family. AhpC/Prx1 subfamily. As to quaternary structure, homodimer; disulfide-linked, upon oxidation. 5 homodimers assemble to form a ring-like decamer. Interacts with TIPIN. The enzyme can be inactivated by further oxidation of the cysteine sulfenic acid (C(P)-SOH) to sulphinic acid (C(P)-SO2H) instead of its condensation to a disulfide bond. It can be reactivated by forming a transient disulfide bond with sulfiredoxin SRXN1, which reduces the cysteine sulfinic acid in an ATP- and Mg-dependent manner. In terms of processing, acetylation increases resistance to transition to high molecular-mass complexes. Deacetylated by HDAC6 which decreases reducing activity.

It localises to the cytoplasm. The catalysed reaction is a hydroperoxide + [thioredoxin]-dithiol = an alcohol + [thioredoxin]-disulfide + H2O. Functionally, thiol-specific peroxidase that catalyzes the reduction of hydrogen peroxide and organic hydroperoxides to water and alcohols, respectively. Plays a role in cell protection against oxidative stress by detoxifying peroxides and as sensor of hydrogen peroxide-mediated signaling events. Might participate in the signaling cascades of growth factors and tumor necrosis factor-alpha by regulating the intracellular concentrations of H(2)O(2). The sequence is that of Peroxiredoxin-2 (PRDX2) from Bos taurus (Bovine).